The primary structure comprises 354 residues: Probable butyrate kinase (354 aa).

Belongs to the acetokinase family.

It is found in the cytoplasm. The catalysed reaction is butanoate + ATP = butanoyl phosphate + ADP. The protein is Probable butyrate kinase of Phocaeicola vulgatus (strain ATCC 8482 / DSM 1447 / JCM 5826 / CCUG 4940 / NBRC 14291 / NCTC 11154) (Bacteroides vulgatus).